The sequence spans 244 residues: MSKLDLNALNELPKVDRILALAETNAELEKLDAEGRVAWALDNLPGEYVLSSSFGIQAAVSLHLVNQIRPDIPVILTDTGYLFPETYRFIDELTDKLKLNLKVYRATESAAWQEARYGKLWEQGVEGIEKYNDINKVEPMNRALKELNAQTWFAGLRREQSGSRANLPVLAIQRGVFKVLPIIDWDNRTIYQYLQKHGLKYHPLWDEGYLSVGDTHTTRKWEPGMAEEETRFFGLKRECGLHEG.

C239 acts as the Nucleophile; cysteine thiosulfonate intermediate in catalysis.

The protein belongs to the PAPS reductase family. CysH subfamily.

Its subcellular location is the cytoplasm. It catalyses the reaction [thioredoxin]-disulfide + sulfite + adenosine 3',5'-bisphosphate + 2 H(+) = [thioredoxin]-dithiol + 3'-phosphoadenylyl sulfate. It functions in the pathway sulfur metabolism; hydrogen sulfide biosynthesis; sulfite from sulfate: step 3/3. Functionally, catalyzes the formation of sulfite from phosphoadenosine 5'-phosphosulfate (PAPS) using thioredoxin as an electron donor. The polypeptide is Phosphoadenosine 5'-phosphosulfate reductase (Escherichia coli (strain K12 / MC4100 / BW2952)).